Here is a 955-residue protein sequence, read N- to C-terminus: Reversion-inducing cysteine-rich protein with Kazal motifs (955 aa).

The N-terminal stretch at 1–22 (MSGCLQILTVLLCCRFWALVFS) is a signal peptide. A Knot 1 repeat occupies 28 to 75 (CVHHAADIPRCRDACEQLASIRSESRLRHLLHRLPSYCPETLSELWIC). Positions 28-326 (CVHHAADIPR…NPVEMDLITC (299 aa)) are 5 X Knot repeats. N-linked (GlcNAc...) asparagine glycosylation occurs at Asn-77. Knot repeat units lie at residues 95–132 (CCEL…LYSC) and 142–188 (CCSY…LILC). Asn-191 carries N-linked (GlcNAc...) asparagine glycosylation. 2 Knot repeats span residues 207-254 (CCDR…LWQC) and 282-326 (CCFK…LITC). N-linked (GlcNAc...) asparagine glycosylation is found at Asn-287 and Asn-375. Kazal-like domains are found at residues 615-661 (LFTG…SCRS), 686-741 (DLSE…HCQD), and 742-778 (ACRR…RCHA). Disulfide bonds link Cys-621–Cys-646, Cys-623–Cys-642, Cys-631–Cys-659, Cys-704–Cys-724, and Cys-713–Cys-739. Ser-931 carries the GPI-anchor amidated serine lipid modification. A propeptide spanning residues 932–955 (SCVSISVCVLLLLCSLILTLTSDL) is cleaved from the precursor.

It belongs to the RECK family. Interacts (via knot repeats) with wnt7a (via disordered linker region); the interaction is direct. Interacts (via knot repeats) with wnt7b (via disordered linker region); the interaction is direct. Interacts with adgra2; the interaction is direct. In terms of tissue distribution, expressed in the cerebral endothelium.

Its subcellular location is the cell membrane. Functions together with adgra2 to enable brain endothelial cells to selectively respond to Wnt7 signals (wnt7a or wnt7b). Plays a key role in Wnt7-specific responses: required for central nervous system (CNS) angiogenesis and blood-brain barrier regulation. Acts as a Wnt7-specific coactivator of canonical Wnt signaling by decoding Wnt ligands: acts by interacting specifically with the disordered linker region of Wnt7, thereby conferring ligand selectivity for Wnt7. Adgra2 is then required to deliver reck-bound Wnt7 to frizzled by assembling a higher-order RECK-ADGRA2-Fzd-LRP5-LRP6 complex. Also acts as a serine protease inhibitor. The chain is Reversion-inducing cysteine-rich protein with Kazal motifs from Danio rerio (Zebrafish).